The chain runs to 470 residues: Cysteine--tRNA ligase 1 (470 aa).

Cys-29 lines the Zn(2+) pocket. The 'HIGH' region signature appears at 31 to 41; the sequence is PTVYDDAHIGN. Zn(2+)-binding residues include Cys-221, His-246, and Glu-250. A 'KMSKS' region motif is present at residues 279–283; the sequence is KMSKS. Lys-282 contributes to the ATP binding site.

This sequence belongs to the class-I aminoacyl-tRNA synthetase family. Monomer. Zn(2+) serves as cofactor.

It is found in the cytoplasm. It carries out the reaction tRNA(Cys) + L-cysteine + ATP = L-cysteinyl-tRNA(Cys) + AMP + diphosphate. The sequence is that of Cysteine--tRNA ligase 1 from Burkholderia lata (strain ATCC 17760 / DSM 23089 / LMG 22485 / NCIMB 9086 / R18194 / 383).